The following is a 329-amino-acid chain: Quinolinate synthase (329 aa).

Iminosuccinate is bound by residues His44 and Ser61. Residue Cys106 participates in [4Fe-4S] cluster binding. Iminosuccinate is bound by residues 132–134 (YIN) and Ser149. Cys192 contributes to the [4Fe-4S] cluster binding site. Iminosuccinate contacts are provided by residues 218–220 (HPE) and Thr235. Cys285 provides a ligand contact to [4Fe-4S] cluster.

Belongs to the quinolinate synthase family. Type 2 subfamily. Requires [4Fe-4S] cluster as cofactor.

The protein resides in the plastid. The protein localises to the cyanelle. The catalysed reaction is iminosuccinate + dihydroxyacetone phosphate = quinolinate + phosphate + 2 H2O + H(+). It participates in cofactor biosynthesis; NAD(+) biosynthesis; quinolinate from iminoaspartate: step 1/1. In terms of biological role, catalyzes the condensation of iminoaspartate with dihydroxyacetone phosphate to form quinolinate. The chain is Quinolinate synthase from Cyanophora paradoxa.